The following is a 342-amino-acid chain: Serpentine receptor class delta-33 (342 aa).

Transmembrane regions (helical) follow at residues 26–46, 62–82, 112–132, 148–168, 205–225, 261–281, and 287–307; these read IFVI…LLLL, IFLA…VTSM, YVGI…SMIY, IILC…CSNI, LIIL…VMYW, IIPL…QLGF, and YSYF…VVTI.

This sequence belongs to the nematode receptor-like protein srd family.

The protein resides in the membrane. The protein is Serpentine receptor class delta-33 (srd-33) of Caenorhabditis elegans.